Consider the following 238-residue polypeptide: Uridylate kinase (238 aa).

12-15 (KLSG) is an ATP binding site. Glycine 54 contacts UMP. ATP is bound by residues glycine 55 and arginine 59. UMP contacts are provided by residues aspartate 74 and 135-142 (TGNPFFTT). 3 residues coordinate ATP: threonine 162, tyrosine 168, and aspartate 171.

This sequence belongs to the UMP kinase family. As to quaternary structure, homohexamer.

The protein localises to the cytoplasm. It catalyses the reaction UMP + ATP = UDP + ADP. The protein operates within pyrimidine metabolism; CTP biosynthesis via de novo pathway; UDP from UMP (UMPK route): step 1/1. Its activity is regulated as follows. Inhibited by UTP. In terms of biological role, catalyzes the reversible phosphorylation of UMP to UDP. This chain is Uridylate kinase, found in Bordetella bronchiseptica (strain ATCC BAA-588 / NCTC 13252 / RB50) (Alcaligenes bronchisepticus).